Consider the following 86-residue polypeptide: Small ribosomal subunit protein uS17 (86 aa).

This sequence belongs to the universal ribosomal protein uS17 family. As to quaternary structure, part of the 30S ribosomal subunit.

One of the primary rRNA binding proteins, it binds specifically to the 5'-end of 16S ribosomal RNA. The polypeptide is Small ribosomal subunit protein uS17 (Caldicellulosiruptor saccharolyticus (strain ATCC 43494 / DSM 8903 / Tp8T 6331)).